A 551-amino-acid chain; its full sequence is Dihydroxy-acid dehydratase (551 aa).

Residue Cys-52 coordinates [2Fe-2S] cluster. Asp-84 contacts Mg(2+). Cys-125 is a binding site for [2Fe-2S] cluster. The Mg(2+) site is built by Asp-126 and Lys-127. At Lys-127 the chain carries N6-carboxylysine. Cys-197 lines the [2Fe-2S] cluster pocket. Glu-448 contacts Mg(2+). The active-site Proton acceptor is Ser-474.

The protein belongs to the IlvD/Edd family. In terms of assembly, homodimer. [2Fe-2S] cluster is required as a cofactor. Mg(2+) serves as cofactor.

The enzyme catalyses (2R)-2,3-dihydroxy-3-methylbutanoate = 3-methyl-2-oxobutanoate + H2O. It carries out the reaction (2R,3R)-2,3-dihydroxy-3-methylpentanoate = (S)-3-methyl-2-oxopentanoate + H2O. The protein operates within amino-acid biosynthesis; L-isoleucine biosynthesis; L-isoleucine from 2-oxobutanoate: step 3/4. Its pathway is amino-acid biosynthesis; L-valine biosynthesis; L-valine from pyruvate: step 3/4. Its function is as follows. Functions in the biosynthesis of branched-chain amino acids. Catalyzes the dehydration of (2R,3R)-2,3-dihydroxy-3-methylpentanoate (2,3-dihydroxy-3-methylvalerate) into 2-oxo-3-methylpentanoate (2-oxo-3-methylvalerate) and of (2R)-2,3-dihydroxy-3-methylbutanoate (2,3-dihydroxyisovalerate) into 2-oxo-3-methylbutanoate (2-oxoisovalerate), the penultimate precursor to L-isoleucine and L-valine, respectively. The sequence is that of Dihydroxy-acid dehydratase from Francisella tularensis subsp. tularensis (strain FSC 198).